A 442-amino-acid chain; its full sequence is Trigger factor (442 aa).

One can recognise a PPIase FKBP-type domain in the interval 176 to 259 (GDFISLSLYV…VNAVIEISSP (84 aa)).

The protein belongs to the FKBP-type PPIase family. Tig subfamily.

It is found in the cytoplasm. It carries out the reaction [protein]-peptidylproline (omega=180) = [protein]-peptidylproline (omega=0). In terms of biological role, involved in protein export. Acts as a chaperone by maintaining the newly synthesized protein in an open conformation. Functions as a peptidyl-prolyl cis-trans isomerase. The protein is Trigger factor of Chlamydia trachomatis serovar A (strain ATCC VR-571B / DSM 19440 / HAR-13).